A 149-amino-acid chain; its full sequence is Transcriptional repressor NrdR (149 aa).

A zinc finger lies at 3–34; the sequence is CPFCFAVDTKVIDSRLVGGGSSVRRRRQCLVC. The region spanning 49–139 is the ATP-cone domain; that stretch reads PRVVKSNDVR…VYRSFEDIKE (91 aa).

The protein belongs to the NrdR family. The cofactor is Zn(2+).

Its function is as follows. Negatively regulates transcription of bacterial ribonucleotide reductase nrd genes and operons by binding to NrdR-boxes. This Shigella boydii serotype 18 (strain CDC 3083-94 / BS512) protein is Transcriptional repressor NrdR.